The sequence spans 132 residues: Small ribosomal subunit protein uS8 (132 aa).

The protein belongs to the universal ribosomal protein uS8 family. In terms of assembly, part of the 30S ribosomal subunit. Contacts proteins S5 and S12.

Its function is as follows. One of the primary rRNA binding proteins, it binds directly to 16S rRNA central domain where it helps coordinate assembly of the platform of the 30S subunit. The polypeptide is Small ribosomal subunit protein uS8 (Caulobacter vibrioides (strain ATCC 19089 / CIP 103742 / CB 15) (Caulobacter crescentus)).